We begin with the raw amino-acid sequence, 470 residues long: Cysteine--tRNA ligase (470 aa).

Zn(2+) is bound at residue cysteine 28. Positions 30–40 (PTVYNYIHIGN) match the 'HIGH' region motif. Residues cysteine 212, histidine 237, and glutamate 241 each coordinate Zn(2+). A 'KMSKS' region motif is present at residues 271 to 275 (KMSKS). Lysine 274 serves as a coordination point for ATP.

Belongs to the class-I aminoacyl-tRNA synthetase family. Monomer. Zn(2+) is required as a cofactor.

It localises to the cytoplasm. The catalysed reaction is tRNA(Cys) + L-cysteine + ATP = L-cysteinyl-tRNA(Cys) + AMP + diphosphate. The protein is Cysteine--tRNA ligase of Pediococcus pentosaceus (strain ATCC 25745 / CCUG 21536 / LMG 10740 / 183-1w).